The primary structure comprises 71 residues: DNA gyrase inhibitor YacG (71 aa).

Residues Cys-7, Cys-10, Cys-26, and Cys-30 each contribute to the Zn(2+) site.

It belongs to the DNA gyrase inhibitor YacG family. As to quaternary structure, interacts with GyrB. Zn(2+) serves as cofactor.

In terms of biological role, inhibits all the catalytic activities of DNA gyrase by preventing its interaction with DNA. Acts by binding directly to the C-terminal domain of GyrB, which probably disrupts DNA binding by the gyrase. The sequence is that of DNA gyrase inhibitor YacG from Shewanella amazonensis (strain ATCC BAA-1098 / SB2B).